We begin with the raw amino-acid sequence, 315 residues long: Ribosomal RNA small subunit methyltransferase H (315 aa).

S-adenosyl-L-methionine-binding positions include 36-38, aspartate 56, phenylalanine 81, aspartate 103, and glutamine 110; that span reads GGH.

This sequence belongs to the methyltransferase superfamily. RsmH family.

Its subcellular location is the cytoplasm. The catalysed reaction is cytidine(1402) in 16S rRNA + S-adenosyl-L-methionine = N(4)-methylcytidine(1402) in 16S rRNA + S-adenosyl-L-homocysteine + H(+). In terms of biological role, specifically methylates the N4 position of cytidine in position 1402 (C1402) of 16S rRNA. The chain is Ribosomal RNA small subunit methyltransferase H from Idiomarina loihiensis (strain ATCC BAA-735 / DSM 15497 / L2-TR).